The sequence spans 398 residues: Riboflavin biosynthesis protein RibBA (398 aa).

Positions 1-199 are DHBP synthase; that stretch reads MFHPIEEALD…IKDLIQYRYN (199 aa). D-ribulose 5-phosphate contacts are provided by residues 26–27, D31, 138–142, and E162; these read RE and RAGHT. E27 serves as a coordination point for Mg(2+). H141 lines the Mg(2+) pocket. The GTP cyclohydrolase II stretch occupies residues 200–398; sequence LTTLVEREVD…MNKLGHLLHF (199 aa). A GTP-binding site is contributed by 251 to 255; that stretch reads RVHSE. The Zn(2+) site is built by C256, C267, and C269. Residues Q272, 294–296, and T316 each bind GTP; that span reads EGR. The active-site Proton acceptor; for GTP cyclohydrolase activity is the D328. R330 serves as the catalytic Nucleophile; for GTP cyclohydrolase activity. Residues T351 and K356 each contribute to the GTP site.

The protein in the N-terminal section; belongs to the DHBP synthase family. In the C-terminal section; belongs to the GTP cyclohydrolase II family. The cofactor is Mg(2+). Requires Mn(2+) as cofactor. Zn(2+) serves as cofactor.

The enzyme catalyses D-ribulose 5-phosphate = (2S)-2-hydroxy-3-oxobutyl phosphate + formate + H(+). It carries out the reaction GTP + 4 H2O = 2,5-diamino-6-hydroxy-4-(5-phosphoribosylamino)-pyrimidine + formate + 2 phosphate + 3 H(+). The protein operates within cofactor biosynthesis; riboflavin biosynthesis; 2-hydroxy-3-oxobutyl phosphate from D-ribulose 5-phosphate: step 1/1. Its pathway is cofactor biosynthesis; riboflavin biosynthesis; 5-amino-6-(D-ribitylamino)uracil from GTP: step 1/4. In terms of biological role, catalyzes the conversion of D-ribulose 5-phosphate to formate and 3,4-dihydroxy-2-butanone 4-phosphate. Catalyzes the conversion of GTP to 2,5-diamino-6-ribosylamino-4(3H)-pyrimidinone 5'-phosphate (DARP), formate and pyrophosphate. The chain is Riboflavin biosynthesis protein RibBA from Bacillus subtilis (strain 168).